We begin with the raw amino-acid sequence, 449 residues long: Trigger factor (449 aa).

One can recognise a PPIase FKBP-type domain in the interval 173-258; the sequence is GDRVTVDFVG…MKKVEWPHLP (86 aa).

Belongs to the FKBP-type PPIase family. Tig subfamily.

Its subcellular location is the cytoplasm. It catalyses the reaction [protein]-peptidylproline (omega=180) = [protein]-peptidylproline (omega=0). Functionally, involved in protein export. Acts as a chaperone by maintaining the newly synthesized protein in an open conformation. Functions as a peptidyl-prolyl cis-trans isomerase. This Burkholderia thailandensis (strain ATCC 700388 / DSM 13276 / CCUG 48851 / CIP 106301 / E264) protein is Trigger factor.